The following is a 123-amino-acid chain: Small ribosomal subunit protein uS12c (123 aa).

Belongs to the universal ribosomal protein uS12 family. In terms of assembly, part of the 30S ribosomal subunit.

The protein resides in the plastid. Its subcellular location is the chloroplast. In terms of biological role, with S4 and S5 plays an important role in translational accuracy. Located at the interface of the 30S and 50S subunits. The polypeptide is Small ribosomal subunit protein uS12c (rps12) (Marchantia polymorpha (Common liverwort)).